We begin with the raw amino-acid sequence, 889 residues long: Translation initiation factor IF-2 (889 aa).

Over residues 115-236 the composition is skewed to basic and acidic residues; sequence EAEAQAKAEA…EAERYSDHHI (122 aa). The disordered stretch occupies residues 115-293; sequence EAEAQAKAEA…RNRSTAPESM (179 aa). Residues 257–270 are compositionally biased toward basic residues; the sequence is GRRARNKNTAKTKR. A compositionally biased stretch (basic and acidic residues) spans 271–280; it reads GGKDARDGRE. Residues 389–558 enclose the tr-type G domain; that stretch reads PRAPVVTIMG…LLQAEVLELK (170 aa). Residues 398–405 are G1; that stretch reads GHVDHGKT. 398–405 contacts GTP; sequence GHVDHGKT. The tract at residues 423–427 is G2; sequence GITQH. A G3 region spans residues 444 to 447; it reads DTPG. Residues 444-448 and 498-501 each bind GTP; these read DTPGH and NKMD. The G4 stretch occupies residues 498–501; sequence NKMD. Residues 534–536 are G5; the sequence is SAK.

It belongs to the TRAFAC class translation factor GTPase superfamily. Classic translation factor GTPase family. IF-2 subfamily.

It is found in the cytoplasm. In terms of biological role, one of the essential components for the initiation of protein synthesis. Protects formylmethionyl-tRNA from spontaneous hydrolysis and promotes its binding to the 30S ribosomal subunits. Also involved in the hydrolysis of GTP during the formation of the 70S ribosomal complex. The chain is Translation initiation factor IF-2 from Shewanella sp. (strain ANA-3).